Reading from the N-terminus, the 256-residue chain is 5-keto-4-deoxy-D-glucarate aldolase (256 aa).

The Proton acceptor role is filled by H50. Position 151 (Q151) interacts with substrate. A Mg(2+)-binding site is contributed by E153. Substrate-binding residues include S178 and D179. D179 serves as a coordination point for Mg(2+).

It belongs to the HpcH/HpaI aldolase family. KDGluc aldolase subfamily. Homohexamer; trimer of dimers. Requires Mg(2+) as cofactor.

It carries out the reaction 5-dehydro-4-deoxy-D-glucarate = 2-hydroxy-3-oxopropanoate + pyruvate. The enzyme catalyses 2-dehydro-3-deoxy-D-glucarate = 2-hydroxy-3-oxopropanoate + pyruvate. The protein operates within carbohydrate acid metabolism; galactarate degradation; D-glycerate from galactarate: step 2/3. Functionally, catalyzes the reversible retro-aldol cleavage of both 5-keto-4-deoxy-D-glucarate and 2-keto-3-deoxy-D-glucarate to pyruvate and tartronic semialdehyde. The protein is 5-keto-4-deoxy-D-glucarate aldolase of Shigella dysenteriae serotype 1 (strain Sd197).